Reading from the N-terminus, the 119-residue chain is Ribonuclease P protein component (119 aa).

The protein belongs to the RnpA family. In terms of assembly, consists of a catalytic RNA component (M1 or rnpB) and a protein subunit.

It catalyses the reaction Endonucleolytic cleavage of RNA, removing 5'-extranucleotides from tRNA precursor.. Functionally, RNaseP catalyzes the removal of the 5'-leader sequence from pre-tRNA to produce the mature 5'-terminus. It can also cleave other RNA substrates such as 4.5S RNA. The protein component plays an auxiliary but essential role in vivo by binding to the 5'-leader sequence and broadening the substrate specificity of the ribozyme. The chain is Ribonuclease P protein component from Photorhabdus laumondii subsp. laumondii (strain DSM 15139 / CIP 105565 / TT01) (Photorhabdus luminescens subsp. laumondii).